A 154-amino-acid polypeptide reads, in one-letter code: MKIYEGKLIAEGKKFGIVVSRFNEFITNKLLEGALDALKRHGALNENIEIAWVPGAFEIPLIAKKMAESKRYDAVIALGAVIRGETPHFDYVANEVSKGIAKISLDTEVPVIFGVLTTDTIEQAIVRAGTKGGNKGFEAAVTAIEMANLMEEIK.

5-amino-6-(D-ribitylamino)uracil is bound by residues Phe-22, 56–58 (AFE), and 80–82 (AVI). 85–86 (ET) contacts (2S)-2-hydroxy-3-oxobutyl phosphate. The active-site Proton donor is the His-88. Position 113 (Phe-113) interacts with 5-amino-6-(D-ribitylamino)uracil. Arg-127 is a binding site for (2S)-2-hydroxy-3-oxobutyl phosphate.

This sequence belongs to the DMRL synthase family.

It carries out the reaction (2S)-2-hydroxy-3-oxobutyl phosphate + 5-amino-6-(D-ribitylamino)uracil = 6,7-dimethyl-8-(1-D-ribityl)lumazine + phosphate + 2 H2O + H(+). It participates in cofactor biosynthesis; riboflavin biosynthesis; riboflavin from 2-hydroxy-3-oxobutyl phosphate and 5-amino-6-(D-ribitylamino)uracil: step 1/2. Functionally, catalyzes the formation of 6,7-dimethyl-8-ribityllumazine by condensation of 5-amino-6-(D-ribitylamino)uracil with 3,4-dihydroxy-2-butanone 4-phosphate. This is the penultimate step in the biosynthesis of riboflavin. The sequence is that of 6,7-dimethyl-8-ribityllumazine synthase from Thermoanaerobacter sp. (strain X514).